A 331-amino-acid chain; its full sequence is Benzylsuccinate synthase activating enzyme (331 aa).

In terms of domain architecture, Radical SAM core spans 15–315; the sequence is QDGPGIRTTI…VTIGGIVGIA (301 aa). Positions 29, 33, 36, 55, 58, 61, 65, 89, 92, 95, and 99 each coordinate [4Fe-4S] cluster. Position 35–37 (35–37) interacts with S-adenosyl-L-methionine; sequence WCH. 4Fe-4S ferredoxin-type domains follow at residues 46–75 and 80–109; these read QEFY…LVRN and TIVQ…IVGQ. Residues Gly-139, 189–191, and His-263 each bind S-adenosyl-L-methionine; that span reads DLK.

Belongs to the organic radical-activating enzymes family. Requires [4Fe-4S] cluster as cofactor.

The enzyme catalyses glycyl-[protein] + reduced [flavodoxin] + S-adenosyl-L-methionine = glycin-2-yl radical-[protein] + semiquinone [flavodoxin] + 5'-deoxyadenosine + L-methionine + H(+). The protein operates within xenobiotic degradation; toluene degradation [regulation]. Functionally, activation of benzylsuccinate synthase under anaerobic conditions by generation of an organic free radical, using S-adenosylmethionine and reduced flavodoxin as cosubstrates to produce 5'-deoxy-adenosine. The sequence is that of Benzylsuccinate synthase activating enzyme (bssD) from Thauera aromatica.